The following is a 145-amino-acid chain: Protein ImpA (145 aa).

Catalysis depends on for autocatalytic cleavage activity residues Ser-64 and Lys-101.

The protein belongs to the peptidase S24 family.

In terms of biological role, involved in UV protection and mutation. The protein is Protein ImpA of Escherichia coli.